Consider the following 274-residue polypeptide: Rhamnulose-1-phosphate aldolase (274 aa).

Glutamate 117 is an active-site residue. The Zn(2+) site is built by histidine 141, histidine 143, and histidine 212.

It belongs to the aldolase class II family. RhaD subfamily. Homotetramer. Zn(2+) serves as cofactor.

It localises to the cytoplasm. The catalysed reaction is L-rhamnulose 1-phosphate = (S)-lactaldehyde + dihydroxyacetone phosphate. Its pathway is carbohydrate degradation; L-rhamnose degradation; glycerone phosphate from L-rhamnose: step 3/3. Its function is as follows. Catalyzes the reversible cleavage of L-rhamnulose-1-phosphate to dihydroxyacetone phosphate (DHAP) and L-lactaldehyde. This is Rhamnulose-1-phosphate aldolase from Pectobacterium atrosepticum (strain SCRI 1043 / ATCC BAA-672) (Erwinia carotovora subsp. atroseptica).